Here is a 132-residue protein sequence, read N- to C-terminus: Small ribosomal subunit protein uS8 (132 aa).

It belongs to the universal ribosomal protein uS8 family. Part of the 30S ribosomal subunit. Contacts proteins S5 and S12.

One of the primary rRNA binding proteins, it binds directly to 16S rRNA central domain where it helps coordinate assembly of the platform of the 30S subunit. In Lactococcus lactis subsp. cremoris (strain MG1363), this protein is Small ribosomal subunit protein uS8.